A 311-amino-acid polypeptide reads, in one-letter code: Putative ribose-phosphate pyrophosphokinase 2 (311 aa).

ATP contacts are provided by residues 38–40 (DGE) and 97–98 (RQ). Residues H131 and D171 each contribute to the Mg(2+) site. Residue D219 coordinates D-ribose 5-phosphate.

The protein belongs to the ribose-phosphate pyrophosphokinase family. Class I subfamily. In terms of assembly, homohexamer. It depends on Mg(2+) as a cofactor.

The protein localises to the cytoplasm. The catalysed reaction is D-ribose 5-phosphate + ATP = 5-phospho-alpha-D-ribose 1-diphosphate + AMP + H(+). The protein operates within metabolic intermediate biosynthesis; 5-phospho-alpha-D-ribose 1-diphosphate biosynthesis; 5-phospho-alpha-D-ribose 1-diphosphate from D-ribose 5-phosphate (route I): step 1/1. Functionally, involved in the biosynthesis of the central metabolite phospho-alpha-D-ribosyl-1-pyrophosphate (PRPP) via the transfer of pyrophosphoryl group from ATP to 1-hydroxyl of ribose-5-phosphate (Rib-5-P). This is Putative ribose-phosphate pyrophosphokinase 2 from Listeria monocytogenes serotype 4b (strain F2365).